A 207-amino-acid chain; its full sequence is Small ribosomal subunit protein uS4 (207 aa).

The disordered stretch occupies residues 33-54 (KLDSKPGQHGRTSGARTSDYGN). The segment covering 42–53 (GRTSGARTSDYG) has biased composition (polar residues). In terms of domain architecture, S4 RNA-binding spans 97–157 (SRLDNVVYRM…EKSKKQVRIA (61 aa)).

This sequence belongs to the universal ribosomal protein uS4 family. In terms of assembly, part of the 30S ribosomal subunit. Contacts protein S5. The interaction surface between S4 and S5 is involved in control of translational fidelity.

Its function is as follows. One of the primary rRNA binding proteins, it binds directly to 16S rRNA where it nucleates assembly of the body of the 30S subunit. In terms of biological role, with S5 and S12 plays an important role in translational accuracy. This is Small ribosomal subunit protein uS4 from Ralstonia pickettii (strain 12J).